The chain runs to 1182 residues: DNA-directed RNA polymerase subunit beta (1182 aa).

The span at 1150 to 1162 (DEEVEMKDEDDDN) shows a compositional bias: acidic residues. The segment at 1150 to 1182 (DEEVEMKDEDDDNIPNATSALEQVVQPTVTEEE) is disordered. Residues 1171-1182 (EQVVQPTVTEEE) are compositionally biased toward low complexity.

It belongs to the RNA polymerase beta chain family. In terms of assembly, the RNAP catalytic core consists of 2 alpha, 1 beta, 1 beta' and 1 omega subunit. When a sigma factor is associated with the core the holoenzyme is formed, which can initiate transcription.

The enzyme catalyses RNA(n) + a ribonucleoside 5'-triphosphate = RNA(n+1) + diphosphate. Its function is as follows. DNA-dependent RNA polymerase catalyzes the transcription of DNA into RNA using the four ribonucleoside triphosphates as substrates. This is DNA-directed RNA polymerase subunit beta from Exiguobacterium sp. (strain ATCC BAA-1283 / AT1b).